Reading from the N-terminus, the 662-residue chain is Glutathione hydrolase 7 (662 aa).

Over 1–106 (MAAENEASQE…AAECSCRQDG (106 aa)) the chain is Cytoplasmic. 4 positions are modified to phosphoserine: serine 17, serine 72, serine 79, and serine 83. The tract at residues 26–90 (SFPRLPEDEP…DGSPLRETRK (65 aa)) is disordered. Residues 72-83 (SSSSEMGSQDGS) are compositionally biased toward low complexity. A helical; Signal-anchor for type II membrane protein membrane pass occupies residues 107–127 (LTVIVTACLTFATGVTVALVM). Residues 128-662 (QIYFGDPQIF…SPDAAGATIL (535 aa)) lie on the Extracellular side of the membrane. N-linked (GlcNAc...) asparagine glycosylation is found at asparagine 198, asparagine 267, asparagine 283, asparagine 330, asparagine 353, asparagine 394, asparagine 452, asparagine 519, asparagine 523, and asparagine 586.

The protein belongs to the gamma-glutamyltransferase family. As to quaternary structure, interacts with TLCD3A. In terms of assembly, heterodimer composed of the light and heavy chains. The active site is located in the light chain. Cleaved by autocatalysis into a large and a small subunit and the autocatalytic cleavage is essential to the functional activation of the enzyme. In terms of tissue distribution, widely expressed, but at low level, except in the airway epithelial cells. Detected in brain, heart, kidney, liver, lung, spleen, testis and trachea.

The protein localises to the membrane. It carries out the reaction an N-terminal (5-L-glutamyl)-[peptide] + an alpha-amino acid = 5-L-glutamyl amino acid + an N-terminal L-alpha-aminoacyl-[peptide]. The enzyme catalyses glutathione + H2O = L-cysteinylglycine + L-glutamate. It catalyses the reaction an S-substituted glutathione + H2O = an S-substituted L-cysteinylglycine + L-glutamate. It participates in sulfur metabolism; glutathione metabolism. In terms of biological role, hydrolyzes and transfers gamma-glutamyl moieties from glutathione and other gamma-glutamyl compounds to acceptors. In Homo sapiens (Human), this protein is Glutathione hydrolase 7.